The primary structure comprises 153 residues: MLFFFFSSKKTVRVCRQLKTVTVLIVPVLPVYTNKVLCCSQCDWHEPANVYSIEQRRSHDDDLPTIKGSDASTQQYERKTYITDASPESQNLFLSKSKEEGVIFLCIQIKKLLGKWESKLKIIKFNKLAKYVYEGNQFFLFIFFLSICQIRNF.

Belongs to the UPF0768 family.

The protein is UPF0768 protein PB2B2.18 of Schizosaccharomyces pombe (strain 972 / ATCC 24843) (Fission yeast).